A 153-amino-acid chain; its full sequence is MAFKKKDTENKEFYIVDKRILPKSIQNVIKVNDLILKTKMSKYSAIKKVGISRSTYYKYKDFIKPFYEGGEDRIYSLHLSLKDRVGILSDVLDVIAREKISILTVVQNMAVDGVAKSTILIKLSESMQKKVDKIISKIGKVEGIADIRITGSN.

Positions Ser76–Ser152 constitute an ACT domain.

This sequence belongs to the UPF0735 family.

This is UPF0735 ACT domain-containing protein FN1487 from Fusobacterium nucleatum subsp. nucleatum (strain ATCC 25586 / DSM 15643 / BCRC 10681 / CIP 101130 / JCM 8532 / KCTC 2640 / LMG 13131 / VPI 4355).